We begin with the raw amino-acid sequence, 189 residues long: Peptidyl-tRNA hydrolase (189 aa).

Tyr-14 contacts tRNA. The active-site Proton acceptor is the His-19. Tyr-64, Asn-66, and Asn-112 together coordinate tRNA.

Belongs to the PTH family. In terms of assembly, monomer.

Its subcellular location is the cytoplasm. The catalysed reaction is an N-acyl-L-alpha-aminoacyl-tRNA + H2O = an N-acyl-L-amino acid + a tRNA + H(+). Hydrolyzes ribosome-free peptidyl-tRNAs (with 1 or more amino acids incorporated), which drop off the ribosome during protein synthesis, or as a result of ribosome stalling. In terms of biological role, catalyzes the release of premature peptidyl moieties from peptidyl-tRNA molecules trapped in stalled 50S ribosomal subunits, and thus maintains levels of free tRNAs and 50S ribosomes. The protein is Peptidyl-tRNA hydrolase of Dehalococcoides mccartyi (strain CBDB1).